A 377-amino-acid polypeptide reads, in one-letter code: 4-hydroxy-tetrahydrodipicolinate synthase 2, chloroplastic (377 aa).

The N-terminal 51 residues, 1 to 51 (MMAAQPTANPGVRLGWKAPGALASPPRLALSRSAAAPLASHRVGRGKFSAA), are a transit peptide targeting the chloroplast. Thr-120 serves as a coordination point for pyruvate. Tyr-206 functions as the Proton donor/acceptor in the catalytic mechanism. Lys-234 acts as the Schiff-base intermediate with substrate in catalysis. Ile-273 contributes to the pyruvate binding site.

Belongs to the DapA family. In terms of assembly, tetramer of modified subunits derived from two genes in different combinations.

Its subcellular location is the plastid. The protein resides in the chloroplast. The enzyme catalyses L-aspartate 4-semialdehyde + pyruvate = (2S,4S)-4-hydroxy-2,3,4,5-tetrahydrodipicolinate + H2O + H(+). The protein operates within amino-acid biosynthesis; L-lysine biosynthesis via DAP pathway; (S)-tetrahydrodipicolinate from L-aspartate: step 3/4. Its activity is regulated as follows. Sensitive to lysine inhibition. This inhibition increase in an allosteric manner with increasing concentration of the inhibitor. Functionally, catalyzes the condensation of (S)-aspartate-beta-semialdehyde [(S)-ASA] and pyruvate to 4-hydroxy-tetrahydrodipicolinate (HTPA). The polypeptide is 4-hydroxy-tetrahydrodipicolinate synthase 2, chloroplastic (Triticum aestivum (Wheat)).